The sequence spans 131 residues: Hypocretin neuropeptide precursor (131 aa).

The first 33 residues, 1 to 33 (MNLPSTKVSWAAVTLLLLLLLLPPALLSSGAAA), serve as a signal peptide directing secretion. Pyrrolidone carboxylic acid is present on Gln34. Cystine bridges form between Cys39/Cys45 and Cys40/Cys47. Leu66 carries the post-translational modification Leucine amide. Met97 carries the methionine amide modification. Positions 98–131 (GRRAGAEPAPRPCLGRRCSAPAAASVAPGGQSGI) are cleaved as a propeptide — removed in mature form.

The protein belongs to the orexin family. Specific enzymatic cleavages at paired basic residues yield the different active peptides. As to expression, abundantly expressed in subthalamic nucleus but undetectable in other brain regions tested (hypothalamus was not tested) and in heart, placenta, lung, liver, skeletal muscle, kidney and pancreas.

It localises to the rough endoplasmic reticulum. The protein localises to the cytoplasmic vesicle. The protein resides in the synapse. Functionally, neuropeptides that play a significant role in the regulation of food intake and sleep-wakefulness, possibly by coordinating the complex behavioral and physiologic responses of these complementary homeostatic functions. A broader role in the homeostatic regulation of energy metabolism, autonomic function, hormonal balance and the regulation of body fluids, is also suggested. Its function is as follows. Binds to orexin receptors HCRTR1/OX1R and HCRTR2/OX2R with a high affinity. Stimulates food intake. Modulates pituitary luteinizing hormone secretion in an ovarian steroid-dependent manner. Binds to orexin receptor HCRTR2/OX2R only. Stimulates food intake. Modulates pituitary luteinizing hormone secretion in an ovarian steroid-dependent manner. In Homo sapiens (Human), this protein is Hypocretin neuropeptide precursor.